Here is a 245-residue protein sequence, read N- to C-terminus: 1-(5-phosphoribosyl)-5-[(5-phosphoribosylamino)methylideneamino] imidazole-4-carboxamide isomerase (245 aa).

Asp7 (proton acceptor) is an active-site residue. Asp129 acts as the Proton donor in catalysis.

It belongs to the HisA/HisF family.

The protein localises to the cytoplasm. The enzyme catalyses 1-(5-phospho-beta-D-ribosyl)-5-[(5-phospho-beta-D-ribosylamino)methylideneamino]imidazole-4-carboxamide = 5-[(5-phospho-1-deoxy-D-ribulos-1-ylimino)methylamino]-1-(5-phospho-beta-D-ribosyl)imidazole-4-carboxamide. Its pathway is amino-acid biosynthesis; L-histidine biosynthesis; L-histidine from 5-phospho-alpha-D-ribose 1-diphosphate: step 4/9. The protein is 1-(5-phosphoribosyl)-5-[(5-phosphoribosylamino)methylideneamino] imidazole-4-carboxamide isomerase of Shewanella oneidensis (strain ATCC 700550 / JCM 31522 / CIP 106686 / LMG 19005 / NCIMB 14063 / MR-1).